The chain runs to 484 residues: Chromosomal replication initiator protein DnaA (484 aa).

The domain I, interacts with DnaA modulators stretch occupies residues methionine 1–threonine 73. Positions threonine 73 to proline 140 are domain II. The segment at phenylalanine 141 to isoleucine 357 is domain III, AAA+ region. ATP contacts are provided by glycine 185, glycine 187, lysine 188, and threonine 189. Positions aspartate 358–asparagine 484 are domain IV, binds dsDNA.

This sequence belongs to the DnaA family. As to quaternary structure, oligomerizes as a right-handed, spiral filament on DNA at oriC.

It localises to the cytoplasm. In terms of biological role, plays an essential role in the initiation and regulation of chromosomal replication. ATP-DnaA binds to the origin of replication (oriC) to initiate formation of the DNA replication initiation complex once per cell cycle. Binds the DnaA box (a 9 base pair repeat at the origin) and separates the double-stranded (ds)DNA. Forms a right-handed helical filament on oriC DNA; dsDNA binds to the exterior of the filament while single-stranded (ss)DNA is stabiized in the filament's interior. The ATP-DnaA-oriC complex binds and stabilizes one strand of the AT-rich DNA unwinding element (DUE), permitting loading of DNA polymerase. After initiation quickly degrades to an ADP-DnaA complex that is not apt for DNA replication. Binds acidic phospholipids. The polypeptide is Chromosomal replication initiator protein DnaA (Borrelia turicatae (strain 91E135)).